The chain runs to 102 residues: ATP-dependent Clp protease adapter protein ClpS (102 aa).

Belongs to the ClpS family. As to quaternary structure, binds to the N-terminal domain of the chaperone ClpA.

Functionally, involved in the modulation of the specificity of the ClpAP-mediated ATP-dependent protein degradation. This chain is ATP-dependent Clp protease adapter protein ClpS, found in Desulfotalea psychrophila (strain LSv54 / DSM 12343).